Reading from the N-terminus, the 123-residue chain is Large ribosomal subunit protein uL29 (123 aa).

It belongs to the universal ribosomal protein uL29 family. In terms of assembly, component of the large ribosomal subunit.

Its subcellular location is the cytoplasm. Its function is as follows. Component of the large ribosomal subunit. The ribosome is a large ribonucleoprotein complex responsible for the synthesis of proteins in the cell. The protein is Large ribosomal subunit protein uL29 (rpl35) of Platichthys flesus (European flounder).